The primary structure comprises 161 residues: Cyclic pyranopterin monophosphate synthase (161 aa).

Substrate is bound by residues 78 to 80 and 116 to 117; these read MCH and ME. The active site involves D131.

This sequence belongs to the MoaC family. As to quaternary structure, homohexamer; trimer of dimers.

It carries out the reaction (8S)-3',8-cyclo-7,8-dihydroguanosine 5'-triphosphate = cyclic pyranopterin phosphate + diphosphate. Its pathway is cofactor biosynthesis; molybdopterin biosynthesis. Its function is as follows. Catalyzes the conversion of (8S)-3',8-cyclo-7,8-dihydroguanosine 5'-triphosphate to cyclic pyranopterin monophosphate (cPMP). This Nitratidesulfovibrio vulgaris (strain ATCC 29579 / DSM 644 / CCUG 34227 / NCIMB 8303 / VKM B-1760 / Hildenborough) (Desulfovibrio vulgaris) protein is Cyclic pyranopterin monophosphate synthase.